Consider the following 245-residue polypeptide: Thiopurine S-methyltransferase (245 aa).

Phosphoserine is present on S14. An S-adenosyl-L-methionine-binding site is contributed by 29–40 (WQDKWVNGKTAF). F40 contributes to the substrate binding site. At K58 the chain carries N6-acetyllysine. S-adenosyl-L-methionine contacts are provided by residues L69, E90, 134–135 (SI), and R152.

This sequence belongs to the class I-like SAM-binding methyltransferase superfamily. TPMT family. As to quaternary structure, monomer.

Its subcellular location is the cytoplasm. The catalysed reaction is S-adenosyl-L-methionine + a thiopurine = S-adenosyl-L-homocysteine + a thiopurine S-methylether.. This chain is Thiopurine S-methyltransferase (TPMT), found in Chlorocebus aethiops (Green monkey).